The primary structure comprises 353 residues: UPF0283 membrane protein YcjF (353 aa).

The Periplasmic portion of the chain corresponds to 1–69 (MTEPLKPRID…LRPKRSLWRK (69 aa)). The chain crosses the membrane as a helical span at residues 70–90 (MVMGGLALFGASVVGQGVQWT). Over 91–99 (MNAWQTQDW) the chain is Cytoplasmic. The helical transmembrane segment at 100-120 (VALGGCAAGALIIGAGVGSVV) threads the bilayer. Residues 121–212 (TEWRRLWRLR…ARREISRSAA (92 aa)) lie on the Periplasmic side of the membrane. Residues 213–233 (ESTLMIAVSPLALVDMAFIAW) traverse the membrane as a helical segment. The Cytoplasmic segment spans residues 234–353 (RNLRLINRIA…LQKGKTPSEK (120 aa)).

The protein belongs to the UPF0283 family.

It is found in the cell inner membrane. This is UPF0283 membrane protein YcjF (ycjF) from Escherichia coli O157:H7.